We begin with the raw amino-acid sequence, 37 residues long: DRQIDMEEQQLEKLNKQDRXPGLRYAAKQQMXTXRMG.

It is found in the secreted. Its function is as follows. Possesses antifungal activity against P.infestans but not F.graminearum. This is Antifungal protein 4 from Malva parviflora (Little mallow).